The primary structure comprises 91 residues: Molybdopterin synthase sulfur carrier subunit (91 aa).

Position 91 is a 1-thioglycine; alternate (Gly-91). Gly-91 bears the Glycyl adenylate; alternate mark.

The protein belongs to the MoaD family. MOCS2A subfamily. In terms of assembly, heterotetramer; composed of 2 small (MOCS2A) and 2 large (MOCS2B) subunits. In terms of processing, C-terminal thiocarboxylation occurs in 2 steps, it is first acyl-adenylated (-COAMP) via the hesA/moeB/thiF part of MOCS3, then thiocarboxylated (-COSH) via the rhodanese domain of MOCS3.

It localises to the cytoplasm. It participates in cofactor biosynthesis; molybdopterin biosynthesis. Its function is as follows. Acts as a sulfur carrier required for molybdopterin biosynthesis. Component of the molybdopterin synthase complex that catalyzes the conversion of precursor Z into molybdopterin by mediating the incorporation of 2 sulfur atoms into precursor Z to generate a dithiolene group. In the complex, serves as sulfur donor by being thiocarboxylated (-COSH) at its C-terminus by MOCS3. After interaction with MOCS2B, the sulfur is then transferred to precursor Z to form molybdopterin. This chain is Molybdopterin synthase sulfur carrier subunit, found in Anopheles gambiae (African malaria mosquito).